The chain runs to 383 residues: Putative glutamate--cysteine ligase 2-2 (383 aa).

The protein belongs to the glutamate--cysteine ligase type 2 family. YbdK subfamily.

The enzyme catalyses L-cysteine + L-glutamate + ATP = gamma-L-glutamyl-L-cysteine + ADP + phosphate + H(+). Its function is as follows. ATP-dependent carboxylate-amine ligase which exhibits weak glutamate--cysteine ligase activity. The protein is Putative glutamate--cysteine ligase 2-2 of Paenarthrobacter aurescens (strain TC1).